The chain runs to 364 residues: Aminomethyltransferase (364 aa).

The protein belongs to the GcvT family. In terms of assembly, the glycine cleavage system is composed of four proteins: P, T, L and H.

The enzyme catalyses N(6)-[(R)-S(8)-aminomethyldihydrolipoyl]-L-lysyl-[protein] + (6S)-5,6,7,8-tetrahydrofolate = N(6)-[(R)-dihydrolipoyl]-L-lysyl-[protein] + (6R)-5,10-methylene-5,6,7,8-tetrahydrofolate + NH4(+). In terms of biological role, the glycine cleavage system catalyzes the degradation of glycine. This chain is Aminomethyltransferase, found in Thermotoga sp. (strain RQ2).